The chain runs to 594 residues: MHEHLKEKLAILPDQPGCYLMKDRQGTVIYVGKAKVLKNRVRSYFTGSHDGKTLRLVGEIVDFEYIVTSSNLEALILELNLIKKHDPKYNIQLKDDKTYPFIKITAEKQPRLLITRNVKKDKGKYFGPYPNAQSAHETKKLLDRMYPLRKCSNMPDKVCLYYHMGQCLAPCVKEVTEEQNKEIVDEIIKFLNGGHKEVRSELETKMYEASEKLEFERAKELRDQIAHIDAIMEKQKMIMSDLVDRDVFGYAVDKGWMCVQVFFVRKGKLIERDVSMFPIYDEPEEGFLTFIGQFYENSSHFKPKEIVVPGSIDSELVERFLEVEATQPKRGKKKDLVELANKNAKIALEEKFYLIERDEERTIKAVENLGKQLGIETPYRIEAFDNSNIQGTNPVSAMIAFIDGKPAKKEYRKYKIKTVQGPDDYESMREVVRRRYTRALKEGLPLPDLIIIDGGKGHLAAASDVLENELGLYIPMAGLVKDDKHKTSHLIIGDPPEPVMLERNSQEFYLLQRVQDEVHRFAITFHRQLHGKSVIQSALDDIPGIGDKRKKVLLKHFGSLKKMKEASIEEFVEAGMPKNVAETIYTYLTDKKTL.

One can recognise a GIY-YIG domain in the interval 14 to 91 (DQPGCYLMKD…IKKHDPKYNI (78 aa)). Residues 196–231 (KEVRSELETKMYEASEKLEFERAKELRDQIAHIDAI) form the UVR domain.

This sequence belongs to the UvrC family. Interacts with UvrB in an incision complex.

The protein localises to the cytoplasm. In terms of biological role, the UvrABC repair system catalyzes the recognition and processing of DNA lesions. UvrC both incises the 5' and 3' sides of the lesion. The N-terminal half is responsible for the 3' incision and the C-terminal half is responsible for the 5' incision. The chain is UvrABC system protein C from Bacillus anthracis (strain A0248).